Reading from the N-terminus, the 340-residue chain is NAD kinase (340 aa).

Catalysis depends on Asp66, which acts as the Proton acceptor. NAD(+) is bound by residues 66-67 (DG), Arg71, 141-142 (ND), Lys152, Asp171, 182-187 (TAYAFS), and Ala206. Residues 321–340 (AGVAGTEPDKPGERDGKAGS) form a disordered region. The segment covering 327-340 (EPDKPGERDGKAGS) has biased composition (basic and acidic residues).

This sequence belongs to the NAD kinase family. A divalent metal cation is required as a cofactor.

The protein localises to the cytoplasm. It catalyses the reaction NAD(+) + ATP = ADP + NADP(+) + H(+). Functionally, involved in the regulation of the intracellular balance of NAD and NADP, and is a key enzyme in the biosynthesis of NADP. Catalyzes specifically the phosphorylation on 2'-hydroxyl of the adenosine moiety of NAD to yield NADP. This chain is NAD kinase, found in Bifidobacterium longum (strain DJO10A).